We begin with the raw amino-acid sequence, 540 residues long: CTP synthase (540 aa).

The amidoligase domain stretch occupies residues 1 to 266; sequence MAVKYIFVTG…LTPIARHLEL (266 aa). CTP is bound at residue serine 14. Serine 14 contributes to the UTP binding site. ATP-binding positions include 15-20 and aspartate 72; that span reads SLGKGI. Aspartate 72 and glutamate 140 together coordinate Mg(2+). CTP-binding positions include 147–149, 187–192, and lysine 223; these read DIE and KTKPTQ. Residues 187 to 192 and lysine 223 each bind UTP; that span reads KTKPTQ. The region spanning 291–540 is the Glutamine amidotransferase type-1 domain; it reads TIGFVGKYLS…VKETLAHKKT (250 aa). L-glutamine is bound at residue glycine 351. Cysteine 378 serves as the catalytic Nucleophile; for glutamine hydrolysis. Residues 379–382, glutamate 402, and arginine 470 contribute to the L-glutamine site; that span reads LGMQ. Residues histidine 513 and glutamate 515 contribute to the active site.

This sequence belongs to the CTP synthase family. Homotetramer.

The catalysed reaction is UTP + L-glutamine + ATP + H2O = CTP + L-glutamate + ADP + phosphate + 2 H(+). The enzyme catalyses L-glutamine + H2O = L-glutamate + NH4(+). It catalyses the reaction UTP + NH4(+) + ATP = CTP + ADP + phosphate + 2 H(+). The protein operates within pyrimidine metabolism; CTP biosynthesis via de novo pathway; CTP from UDP: step 2/2. Allosterically activated by GTP, when glutamine is the substrate; GTP has no effect on the reaction when ammonia is the substrate. The allosteric effector GTP functions by stabilizing the protein conformation that binds the tetrahedral intermediate(s) formed during glutamine hydrolysis. Inhibited by the product CTP, via allosteric rather than competitive inhibition. Functionally, catalyzes the ATP-dependent amination of UTP to CTP with either L-glutamine or ammonia as the source of nitrogen. Regulates intracellular CTP levels through interactions with the four ribonucleotide triphosphates. In Helicobacter hepaticus (strain ATCC 51449 / 3B1), this protein is CTP synthase.